We begin with the raw amino-acid sequence, 119 residues long: Ribonuclease P protein component (119 aa).

The protein belongs to the RnpA family. As to quaternary structure, consists of a catalytic RNA component (M1 or rnpB) and a protein subunit.

The enzyme catalyses Endonucleolytic cleavage of RNA, removing 5'-extranucleotides from tRNA precursor.. Its function is as follows. RNaseP catalyzes the removal of the 5'-leader sequence from pre-tRNA to produce the mature 5'-terminus. It can also cleave other RNA substrates such as 4.5S RNA. The protein component plays an auxiliary but essential role in vivo by binding to the 5'-leader sequence and broadening the substrate specificity of the ribozyme. In Corynebacterium diphtheriae (strain ATCC 700971 / NCTC 13129 / Biotype gravis), this protein is Ribonuclease P protein component.